The chain runs to 370 residues: UPF0284 protein PCC7424_2681 (370 aa).

This sequence belongs to the UPF0284 family.

This chain is UPF0284 protein PCC7424_2681, found in Gloeothece citriformis (strain PCC 7424) (Cyanothece sp. (strain PCC 7424)).